A 70-amino-acid chain; its full sequence is Large ribosomal subunit protein bL31 (70 aa).

Zn(2+)-binding residues include Cys16, Cys18, Cys37, and Cys40.

It belongs to the bacterial ribosomal protein bL31 family. Type A subfamily. In terms of assembly, part of the 50S ribosomal subunit. Zn(2+) serves as cofactor.

Its function is as follows. Binds the 23S rRNA. This chain is Large ribosomal subunit protein bL31, found in Erwinia tasmaniensis (strain DSM 17950 / CFBP 7177 / CIP 109463 / NCPPB 4357 / Et1/99).